A 495-amino-acid chain; its full sequence is Serine/threonine-protein kinase STN8, chloroplastic (495 aa).

A chloroplast-targeting transit peptide spans 1–49; sequence MASLLSPATPTATSAAFHSCSTAGFSTPTHISSQNSSLSLLSRRGCMMR. The region spanning 133–477 is the Protein kinase domain; sequence FLVTEKLGEG…AAAALRHPYF (345 aa). Residues 139–147 and K186 each bind ATP; that span reads LGEGSFGVV. Catalysis depends on D308, which acts as the Proton acceptor.

The protein belongs to the protein kinase superfamily. Ser/Thr protein kinase family.

It localises to the plastid. The protein localises to the chloroplast thylakoid. It carries out the reaction L-seryl-[protein] + ATP = O-phospho-L-seryl-[protein] + ADP + H(+). The catalysed reaction is L-threonyl-[protein] + ATP = O-phospho-L-threonyl-[protein] + ADP + H(+). Its function is as follows. Light-dependent serine/threonine protein kinase that specifically phosphorylates N-terminal threonine residues in psbA/D1, psbD/D2, psbC/CP43 and psbH, which are components of the core antenna complex of photosystem II. Phosphorylation of PSII core components facilitates the exchange of chlorophyll proteins between the grana and the stroma lamellae. Also involved in the phosphorylation of the calcium-sensing receptor (CaS). This Arabidopsis thaliana (Mouse-ear cress) protein is Serine/threonine-protein kinase STN8, chloroplastic (STN8).